Here is a 141-residue protein sequence, read N- to C-terminus: VLSPADKTNVKAAWGKVGGHAGEYGAEALERMFLSFPTTKTYFPHFDLSHGSAQVKGHGKKVADALTLAVDHVDDMPQALSALSDLHAHKLRVDPVNFKLLSHCLLVTLAAHLPAEFTPAVHASLDKFLASVGTVLTSKYR.

In terms of domain architecture, Globin spans 1–141; that stretch reads VLSPADKTNV…VGTVLTSKYR (141 aa). Residue Ser3 is modified to Phosphoserine. Lys7 carries the post-translational modification N6-succinyllysine. Thr8 is subject to Phosphothreonine. Position 11 is an N6-succinyllysine (Lys11). Lys16 carries the post-translational modification N6-acetyllysine; alternate. Lys16 is subject to N6-succinyllysine; alternate. Tyr24 is subject to Phosphotyrosine. Ser35 carries the post-translational modification Phosphoserine. Lys40 is subject to N6-succinyllysine. Ser49 bears the Phosphoserine mark. An O2-binding site is contributed by His58. Heme b is bound at residue His87. Ser102 is subject to Phosphoserine. Position 108 is a phosphothreonine (Thr108). Ser124 and Ser131 each carry phosphoserine. Phosphothreonine occurs at positions 134 and 137. At Ser138 the chain carries Phosphoserine.

Belongs to the globin family. Heterotetramer of two alpha chains and two beta chains. In terms of tissue distribution, red blood cells.

Involved in oxygen transport from the lung to the various peripheral tissues. The chain is Hemoglobin subunit alpha-1/2/3 from Macaca nemestrina (Pig-tailed macaque).